The sequence spans 371 residues: Peptidyl-prolyl cis-trans isomerase D (371 aa).

Positions 11–172 (FFDIQIGNEK…KDVTIVECGE (162 aa)) constitute a PPIase cyclophilin-type domain. Positions 175–195 (GQDYDDADKQTPDATGDPYED) are disordered. TPR repeat units follow at residues 214–247 (ASEL…LHEF), 267–300 (FALH…ANAA), and 308–341 (AKAY…APGD).

It belongs to the cyclophilin-type PPIase family. PPIase D subfamily.

Its subcellular location is the cytoplasm. It carries out the reaction [protein]-peptidylproline (omega=180) = [protein]-peptidylproline (omega=0). Functionally, PPIases accelerate the folding of proteins. It catalyzes the cis-trans isomerization of proline imidic peptide bonds in oligopeptides. This Aspergillus oryzae (strain ATCC 42149 / RIB 40) (Yellow koji mold) protein is Peptidyl-prolyl cis-trans isomerase D (cpr6).